The primary structure comprises 312 residues: Olfactory receptor 6Z7 (312 aa).

The Extracellular portion of the chain corresponds to 1–29; that stretch reads MERSLALANMTRVQQFILLGLSTRLDIRD. Asn9 carries an N-linked (GlcNAc...) asparagine glycan. Residues 30 to 50 form a helical membrane-spanning segment; the sequence is ALFAVFLTLYLLTLLENTLII. The Cytoplasmic portion of the chain corresponds to 51–69; it reads YLICSHKELHKPMYFFLGN. A helical transmembrane segment spans residues 70 to 90; the sequence is LSCLEMCYVSVTMPTLLMGLW. Asn91 is a topological domain (extracellular). The chain crosses the membrane as a helical span at residues 92-112; it reads GLYHIPFIACMTQLFFFIVLV. Cys101 and Cys193 are disulfide-bonded. Residues 113-141 lie on the Cytoplasmic side of the membrane; the sequence is GTECILLASMAYDRYVAICRPLHYPVLMR. The helical transmembrane segment at 142-162 threads the bilayer; it reads PQVCLGLAMISWLGGLLVSMI. Over 163–195 the chain is Extracellular; it reads KTTCIATLSYCGPNVLNHFFCDVSPLLNLSCTH. The N-linked (GlcNAc...) asparagine glycan is linked to Asn190. The helical transmembrane segment at 196–216 threads the bilayer; it reads VALTELVDFISAIVILWGCFL. Residues 217-241 are Cytoplasmic-facing; that stretch reads TTMASYVAIGRAVLRMPSTTARYKA. The helical transmembrane segment at 242–262 threads the bilayer; the sequence is FSTCASHLVVVGIFYSVTIFI. The Extracellular portion of the chain corresponds to 263 to 275; it reads YARPKRIEAMDLN. The chain crosses the membrane as a helical span at residues 276–296; the sequence is KVLSVIYTVVTPMCNPVIYCL. Residues 297-312 lie on the Cytoplasmic side of the membrane; that stretch reads RNKEVQVALHRTMHWS.

This sequence belongs to the G-protein coupled receptor 1 family.

Its subcellular location is the cell membrane. Its function is as follows. Odorant receptor. This chain is Olfactory receptor 6Z7, found in Mus musculus (Mouse).